A 180-amino-acid chain; its full sequence is Large ribosomal subunit protein uL5 (180 aa).

Belongs to the universal ribosomal protein uL5 family. Part of the 50S ribosomal subunit; part of the 5S rRNA/L5/L18/L25 subcomplex. Contacts the 5S rRNA and the P site tRNA. Forms a bridge to the 30S subunit in the 70S ribosome.

In terms of biological role, this is one of the proteins that bind and probably mediate the attachment of the 5S RNA into the large ribosomal subunit, where it forms part of the central protuberance. In the 70S ribosome it contacts protein S13 of the 30S subunit (bridge B1b), connecting the 2 subunits; this bridge is implicated in subunit movement. Contacts the P site tRNA; the 5S rRNA and some of its associated proteins might help stabilize positioning of ribosome-bound tRNAs. The sequence is that of Large ribosomal subunit protein uL5 from Streptococcus agalactiae serotype Ia (strain ATCC 27591 / A909 / CDC SS700).